The primary structure comprises 657 residues: Probable potassium transport system protein Kup (657 aa).

12 helical membrane-spanning segments follow: residues 15-35, 48-68, 100-120, 147-167, 173-193, 219-239, 251-271, 292-312, 348-368, 378-398, 403-423, and 431-451; these read SFLI…LYVM, ITPD…TLLT, WLII…MLTP, IIII…HFGT, IFGP…IVNL, LGFF…ALYS, LTWP…AAWI, MMPS…AIIA, IYMP…VLYF, YGLS…NYLL, PLPI…SFLI, and KGGF…YIWI.

It belongs to the HAK/KUP transporter (TC 2.A.72) family.

The protein localises to the cell membrane. The catalysed reaction is K(+)(in) + H(+)(in) = K(+)(out) + H(+)(out). Its function is as follows. Transport of potassium into the cell. Likely operates as a K(+):H(+) symporter. This is Probable potassium transport system protein Kup from Clostridium perfringens (strain SM101 / Type A).